A 409-amino-acid chain; its full sequence is MTITPLNPTSTQQPDSLGRFGKFGGKYVPETLMPALLQLETACKKYSQDPTFKQELQQLLRDYVGRPSPLYFAERLTAHYTKPDGTGPQIYLKREDLNHTGAHKINNALGQALLAQRMGKQRIIAETGAGQHGVATATVCARFGLKCVIYMGIHDMERQALNVFRMRLMGAEVRPVEAGTGTLKDATSEAIRDWVTNVETTHYILGSVAGPHPYPMMVRDFHAVIGVETRAQCLEKWNGLPDILMACVGGGSNAMGLFHEFINDPSVRMIGVEAAGKGVDTNKHAATLTLGRVGVLHGAMSYLLQDEEGQIIEPHSISAGLDYPGVGPEHSFLKDSGRVEYYSVTDNEAVAAFQRLSQLEGIIPALETAHAIAYLETLCPQLSGSPRIVFNCSGRGDKDVQTVGKFLEG.

Residue Lys104 is modified to N6-(pyridoxal phosphate)lysine.

The protein belongs to the TrpB family. As to quaternary structure, tetramer of two alpha and two beta chains. Requires pyridoxal 5'-phosphate as cofactor.

It carries out the reaction (1S,2R)-1-C-(indol-3-yl)glycerol 3-phosphate + L-serine = D-glyceraldehyde 3-phosphate + L-tryptophan + H2O. Its pathway is amino-acid biosynthesis; L-tryptophan biosynthesis; L-tryptophan from chorismate: step 5/5. The beta subunit is responsible for the synthesis of L-tryptophan from indole and L-serine. This chain is Tryptophan synthase beta chain, found in Trichodesmium erythraeum (strain IMS101).